The following is a 491-amino-acid chain: Anthranilate synthase component 1 (491 aa).

L-tryptophan is bound by residues Ser49 and 271 to 273 (PYL). 306 to 307 (GT) lines the chorismate pocket. Glu333 serves as a coordination point for Mg(2+). Residues Tyr421, Arg441, 455 to 457 (GAG), and Gly457 each bind chorismate. Position 470 (Glu470) interacts with Mg(2+).

The protein belongs to the anthranilate synthase component I family. As to quaternary structure, heterotetramer consisting of two non-identical subunits: a beta subunit (TrpG) and a large alpha subunit (TrpE). The cofactor is Mg(2+).

It catalyses the reaction chorismate + L-glutamine = anthranilate + pyruvate + L-glutamate + H(+). It functions in the pathway amino-acid biosynthesis; L-tryptophan biosynthesis; L-tryptophan from chorismate: step 1/5. Its activity is regulated as follows. Feedback inhibited by tryptophan. Part of a heterotetrameric complex that catalyzes the two-step biosynthesis of anthranilate, an intermediate in the biosynthesis of L-tryptophan. In the first step, the glutamine-binding beta subunit (TrpG) of anthranilate synthase (AS) provides the glutamine amidotransferase activity which generates ammonia as a substrate that, along with chorismate, is used in the second step, catalyzed by the large alpha subunit of AS (TrpE) to produce anthranilate. In the absence of TrpG, TrpE can synthesize anthranilate directly from chorismate and high concentrations of ammonia. The protein is Anthranilate synthase component 1 (trpE) of Neisseria meningitidis serogroup A / serotype 4A (strain DSM 15465 / Z2491).